The primary structure comprises 223 residues: Small ribosomal subunit protein uS3 (223 aa).

Residues 39–108 (IRNFVKKNSY…NILINIVEVK (70 aa)) form the KH type-2 domain.

This sequence belongs to the universal ribosomal protein uS3 family. Part of the 30S ribosomal subunit. Forms a tight complex with proteins S10 and S14.

Its function is as follows. Binds the lower part of the 30S subunit head. Binds mRNA in the 70S ribosome, positioning it for translation. The sequence is that of Small ribosomal subunit protein uS3 from Clostridium botulinum (strain 657 / Type Ba4).